The following is a 1581-amino-acid chain: Rho guanine nucleotide exchange factor 5 (1581 aa).

Disordered regions lie at residues 25 to 54 (EGIM…TDGH), 159 to 274 (VSKE…EQKQ), 316 to 643 (LRDS…RDGI), 659 to 700 (SEEF…PPTV), 741 to 810 (HSHP…PEFY), and 829 to 1051 (VPII…GSSD). Residues 41–54 (QEDRDPSYKWTDGH) are compositionally biased toward basic and acidic residues. Polar residues predominate over residues 204-221 (KQLQLEATQENQGQEGFL). A compositionally biased stretch (acidic residues) spans 228 to 241 (GLEEQEGQEVEIQE). Composition is skewed to basic and acidic residues over residues 326-336 (QESREVEERRV) and 345-380 (RLVE…DSGD). Ser-446 carries the post-translational modification Phosphoserine. Residues 474-492 (LDNRTHNSQQEEFRLRKGI) show a composition bias toward basic and acidic residues. Over residues 496-507 (SASTSVAPSGTR) the composition is skewed to polar residues. The span at 515 to 531 (PNVFSSTATLSPVSSSV) shows a compositional bias: low complexity. Composition is skewed to polar residues over residues 569-595 (TSDT…NSFP), 603-613 (TPDSLGMSLSF), 662-685 (FTSN…QNSA), 748-760 (TLSS…SKGS), and 779-791 (TPES…TSIP). A compositionally biased stretch (pro residues) spans 829–843 (VPIIDPSSEPPPLPP). 3 stretches are compositionally biased toward polar residues: residues 867 to 881 (PNNQ…SVGR), 889 to 905 (GRST…NNEV), and 912 to 925 (SNMT…SPTT). Residues Ser-953 and Ser-969 each carry the phosphoserine modification. The segment covering 975–986 (KNSEKPLHHQLE) has biased composition (basic and acidic residues). Residues Ser-1029 and Ser-1110 each carry the phosphoserine modification. Residues 1158–1342 (KLQEAKFELI…EKLIRDCNSN (185 aa)) enclose the DH domain. The PH domain occupies 1375 to 1488 (LVKSGELTAL…SALAMPREEL (114 aa)). In terms of domain architecture, SH3 spans 1494–1555 (YDSPQVQCLR…PVQQVEFISN (62 aa)).

As to quaternary structure, interacts with SRC. Forms a ternary complex with SRC and the PI3K 85 kDa subunit. Interacts with and is activated by the heterodimer formed by GNB1 and GNG2. Interacts with ODAM (via C-terminus). Interacts with RHOA. In terms of processing, activation of SRC induces tyrosine phosphorylation of ARHGEF5.

It localises to the nucleus. The protein localises to the cytoplasm. The protein resides in the cell projection. Its subcellular location is the podosome. Guanine nucleotide exchange factor which activates Rho GTPases. Strongly activates RHOA. Also strongly activates RHOB, weakly activates RHOC and RHOG and shows no effect on RHOD, RHOV, RHOQ or RAC1. Involved in regulation of cell shape and actin cytoskeletal organization. Plays a role in actin organization by generating a loss of actin stress fibers and the formation of membrane ruffles and filopodia. Required for SRC-induced podosome formation. Involved in positive regulation of immature dendritic cell migration. The sequence is that of Rho guanine nucleotide exchange factor 5 from Mus musculus (Mouse).